A 332-amino-acid chain; its full sequence is uncharacterized protein (332 aa).

The segment at 159 to 256 (PLEISGRGGN…PRPHPWGPGP (98 aa)) is disordered. Pro residues predominate over residues 201-231 (RPPSPRPPSPRPPHPRPPSPRPPHPRPPSPR).

It localises to the virion. This is an uncharacterized protein from Acanthamoeba polyphaga (Amoeba).